We begin with the raw amino-acid sequence, 364 residues long: Aminomethyltransferase (364 aa).

Belongs to the GcvT family. The glycine cleavage system is composed of four proteins: P, T, L and H.

The enzyme catalyses N(6)-[(R)-S(8)-aminomethyldihydrolipoyl]-L-lysyl-[protein] + (6S)-5,6,7,8-tetrahydrofolate = N(6)-[(R)-dihydrolipoyl]-L-lysyl-[protein] + (6R)-5,10-methylene-5,6,7,8-tetrahydrofolate + NH4(+). In terms of biological role, the glycine cleavage system catalyzes the degradation of glycine. The chain is Aminomethyltransferase from Shigella flexneri.